We begin with the raw amino-acid sequence, 83 residues long: Exodeoxyribonuclease 7 small subunit (83 aa).

This sequence belongs to the XseB family. As to quaternary structure, heterooligomer composed of large and small subunits.

It localises to the cytoplasm. It carries out the reaction Exonucleolytic cleavage in either 5'- to 3'- or 3'- to 5'-direction to yield nucleoside 5'-phosphates.. Functionally, bidirectionally degrades single-stranded DNA into large acid-insoluble oligonucleotides, which are then degraded further into small acid-soluble oligonucleotides. The polypeptide is Exodeoxyribonuclease 7 small subunit (Bradyrhizobium diazoefficiens (strain JCM 10833 / BCRC 13528 / IAM 13628 / NBRC 14792 / USDA 110)).